The following is a 962-amino-acid chain: Protease 3 (962 aa).

A signal peptide spans 1–23 (MPRSTWFKALLLLVALWAPLSQA). Residue His-88 coordinates Zn(2+). The Proton acceptor role is filled by Glu-91. Positions 92 and 169 each coordinate Zn(2+).

It belongs to the peptidase M16 family. As to quaternary structure, monomer. Zn(2+) is required as a cofactor.

It is found in the periplasm. The catalysed reaction is Preferential cleavage of 16-Tyr-|-Leu-17 and 25-Phe-|-Tyr-26 bonds of oxidized insulin B chain. Also acts on other substrates of Mw less than 7 kDa such as insulin and glucagon.. In terms of biological role, endopeptidase that degrades small peptides of less than 7 kDa, such as glucagon and insulin. The polypeptide is Protease 3 (ptrA) (Escherichia coli (strain K12)).